The sequence spans 318 residues: MAPEFESGTKMATTIQKSSCAYVTFLAGNGDYVKGVVGLAKGLIKAKSMYPLVVAILPDVPEEHRMILTRHGCIVKEIEPLAPSLQSLDKYARSYYVLNYSKLRIWEFVEYSKMVYLDGDMQVFENIDHLFELPDKYLYAVADCICDMYGEPCDEVLPWPKELGPRPSVYFNAGMFVFQPNPSVYVRLLNTLKVTPPTQFAEQDFLNMYFKDVYKPIPYTYNMLLAMLWRHPEKIEVNKAKAVHYCSPGAKPWKYTGKEEHMDREDIKMLVKKWWDIYNDTTLDHKAQGSTVEANRLRGAAFSDTNISALYITSPSAA.

Lysine 102 is a catalytic residue. The Mn(2+) site is built by aspartate 118, aspartate 120, and histidine 244.

Belongs to the glycosyltransferase 8 family. Galactosyltransferase subfamily. A divalent metal cation is required as a cofactor. As to expression, expressed in seeds, mostly in radicle tips.

The protein localises to the cytoplasm. The catalysed reaction is myo-inositol + UDP-alpha-D-galactose = alpha-D-galactosyl-(1-&gt;3)-1D-myo-inositol + UDP + H(+). In terms of biological role, galactinol synthase involved in the biosynthesis of raffinose family oligosaccharides (RFOs) that function as osmoprotectants. May promote plant stress tolerance. The protein is Galactinol synthase 1 (GOLS1) of Solanum lycopersicum (Tomato).